The primary structure comprises 192 residues: Lipid A acyltransferase PagP (192 aa).

A signal peptide spans 1 to 26 (MTVVNKSFLTFLVFFCQILFPLNASA). Active-site residues include H64, D107, and S108.

Belongs to the lipid A palmitoyltransferase family. As to quaternary structure, homodimer.

It localises to the cell outer membrane. The catalysed reaction is a lipid A + a 1,2-diacyl-sn-glycero-3-phosphocholine = a hepta-acyl lipid A + a 2-acyl-sn-glycero-3-phosphocholine. It catalyses the reaction a lipid IVA + a 1,2-diacyl-sn-glycero-3-phosphocholine = a lipid IVB + a 2-acyl-sn-glycero-3-phosphocholine. It carries out the reaction a lipid IIA + a 1,2-diacyl-sn-glycero-3-phosphocholine = a lipid IIB + a 2-acyl-sn-glycero-3-phosphocholine. Functionally, transfers a fatty acid residue from the sn-1 position of a phospholipid to the N-linked hydroxyfatty acid chain on the proximal unit of lipid A or its precursors. The chain is Lipid A acyltransferase PagP from Cronobacter turicensis (strain DSM 18703 / CCUG 55852 / LMG 23827 / z3032).